The primary structure comprises 648 residues: Threonine--tRNA ligase (648 aa).

The TGS domain occupies 1 to 61; sequence MIDIILPDGS…INTATVKAIT (61 aa). The interval 243 to 549 is catalytic; it reads DHRKLGRELE…LIEHYSGRLP (307 aa). The Zn(2+) site is built by cysteine 349, histidine 400, and histidine 526.

This sequence belongs to the class-II aminoacyl-tRNA synthetase family. In terms of assembly, homodimer. It depends on Zn(2+) as a cofactor.

The protein resides in the cytoplasm. The catalysed reaction is tRNA(Thr) + L-threonine + ATP = L-threonyl-tRNA(Thr) + AMP + diphosphate + H(+). In terms of biological role, catalyzes the attachment of threonine to tRNA(Thr) in a two-step reaction: L-threonine is first activated by ATP to form Thr-AMP and then transferred to the acceptor end of tRNA(Thr). Also edits incorrectly charged L-seryl-tRNA(Thr). The sequence is that of Threonine--tRNA ligase from Orientia tsutsugamushi (strain Boryong) (Rickettsia tsutsugamushi).